Reading from the N-terminus, the 188-residue chain is Inosine triphosphate pyrophosphatase (188 aa).

Residue 11–16 (TGNKHK) participates in ITP binding. E39 provides a ligand contact to Mg(2+). Residues K51, 67–68 (DT), K84, 143–146 (FGWN), and 171–172 (HR) each bind ITP.

The protein belongs to the HAM1 NTPase family. In terms of assembly, homodimer. Mg(2+) is required as a cofactor. It depends on Mn(2+) as a cofactor.

The protein localises to the cytoplasm. Its subcellular location is the nucleus. The enzyme catalyses ITP + H2O = IMP + diphosphate + H(+). The catalysed reaction is dITP + H2O = dIMP + diphosphate + H(+). It catalyses the reaction XTP + H2O = XMP + diphosphate + H(+). In terms of biological role, pyrophosphatase that hydrolyzes non-canonical purine nucleotides such as inosine triphosphate (ITP), deoxyinosine triphosphate (dITP) or xanthosine 5'-triphosphate (XTP) to their respective monophosphate derivatives. The enzyme does not distinguish between the deoxy- and ribose forms. Probably excludes non-canonical purines from RNA and DNA precursor pools, thus preventing their incorporation into RNA and DNA and avoiding chromosomal lesions. The chain is Inosine triphosphate pyrophosphatase from Schizosaccharomyces pombe (strain 972 / ATCC 24843) (Fission yeast).